A 344-amino-acid chain; its full sequence is tRNA N6-adenosine threonylcarbamoyltransferase (344 aa).

The Fe cation site is built by H114 and H118. Substrate is bound by residues 136–140, D170, G183, D187, and N278; that span reads LVSGG. Position 306 (D306) interacts with Fe cation.

This sequence belongs to the KAE1 / TsaD family. Fe(2+) is required as a cofactor.

The protein localises to the cytoplasm. The enzyme catalyses L-threonylcarbamoyladenylate + adenosine(37) in tRNA = N(6)-L-threonylcarbamoyladenosine(37) in tRNA + AMP + H(+). Its function is as follows. Required for the formation of a threonylcarbamoyl group on adenosine at position 37 (t(6)A37) in tRNAs that read codons beginning with adenine. Is involved in the transfer of the threonylcarbamoyl moiety of threonylcarbamoyl-AMP (TC-AMP) to the N6 group of A37, together with TsaE and TsaB. TsaD likely plays a direct catalytic role in this reaction. This is tRNA N6-adenosine threonylcarbamoyltransferase from Mycobacteroides abscessus (strain ATCC 19977 / DSM 44196 / CCUG 20993 / CIP 104536 / JCM 13569 / NCTC 13031 / TMC 1543 / L948) (Mycobacterium abscessus).